Reading from the N-terminus, the 880-residue chain is Leucine--tRNA ligase (880 aa).

The 'HIGH' region motif lies at 49–59 (PYPSGRIHMGH). The 'KMSKS' region signature appears at 638–642 (KMSKS). Lys641 contacts ATP.

It belongs to the class-I aminoacyl-tRNA synthetase family.

The protein localises to the cytoplasm. The catalysed reaction is tRNA(Leu) + L-leucine + ATP = L-leucyl-tRNA(Leu) + AMP + diphosphate. The protein is Leucine--tRNA ligase of Bartonella henselae (strain ATCC 49882 / DSM 28221 / CCUG 30454 / Houston 1) (Rochalimaea henselae).